The primary structure comprises 122 residues: Large ribosomal subunit protein uL14 (122 aa).

This sequence belongs to the universal ribosomal protein uL14 family. Part of the 50S ribosomal subunit. Forms a cluster with proteins L3 and L19. In the 70S ribosome, L14 and L19 interact and together make contacts with the 16S rRNA in bridges B5 and B8.

In terms of biological role, binds to 23S rRNA. Forms part of two intersubunit bridges in the 70S ribosome. In Lactobacillus gasseri (strain ATCC 33323 / DSM 20243 / BCRC 14619 / CIP 102991 / JCM 1131 / KCTC 3163 / NCIMB 11718 / NCTC 13722 / AM63), this protein is Large ribosomal subunit protein uL14.